Reading from the N-terminus, the 258-residue chain is Type II restriction enzyme HindII (258 aa).

It catalyses the reaction Endonucleolytic cleavage of DNA to give specific double-stranded fragments with terminal 5'-phosphates.. In terms of biological role, a P subtype restriction enzyme that recognizes the double-stranded sequence 5'-GTYRAC-3' and cleaves after Y-3. In Haemophilus influenzae (strain ATCC 51907 / DSM 11121 / KW20 / Rd), this protein is Type II restriction enzyme HindII (hindIIR).